The sequence spans 101 residues: Small ribosomal subunit protein bS18c (101 aa).

Belongs to the bacterial ribosomal protein bS18 family. In terms of assembly, part of the 30S ribosomal subunit.

The protein localises to the plastid. It localises to the chloroplast. This is Small ribosomal subunit protein bS18c from Morus indica (Mulberry).